The following is a 399-amino-acid chain: Phosphomevalonate dehydratase large subunit (399 aa).

The (R)-5-phosphomevalonate site is built by glycine 54, valine 55, serine 56, asparagine 85, and proline 86. Cysteine 125 contacts [4Fe-4S] cluster. (R)-5-phosphomevalonate contacts are provided by glutamate 144 and serine 145. The [4Fe-4S] cluster site is built by cysteine 298 and cysteine 355. Lysine 375 serves as a coordination point for (R)-5-phosphomevalonate.

This sequence belongs to the AcnX type II large subunit family. As to quaternary structure, heterodimer composed of a large subunit (PMDh-L) and a small subunit (PMDh-S). [4Fe-4S] cluster serves as cofactor.

The catalysed reaction is (R)-5-phosphomevalonate = (2E)-3-methyl-5-phosphooxypent-2-enoate + H2O. It functions in the pathway isoprenoid biosynthesis; isopentenyl diphosphate biosynthesis via mevalonate pathway. Functionally, component of a hydro-lyase that catalyzes the dehydration of mevalonate 5-phosphate (MVA5P) to form trans-anhydromevalonate 5-phosphate (tAHMP). Involved in the archaeal mevalonate (MVA) pathway, which provides fundamental precursors for isoprenoid biosynthesis, such as isopentenyl diphosphate (IPP) and dimethylallyl diphosphate (DMAPP). This chain is Phosphomevalonate dehydratase large subunit, found in Methanothermobacter thermautotrophicus (strain ATCC 29096 / DSM 1053 / JCM 10044 / NBRC 100330 / Delta H) (Methanobacterium thermoautotrophicum).